The primary structure comprises 356 residues: Branched-chain-amino-acid aminotransferase 6 (356 aa).

Lysine 199 is modified (N6-(pyridoxal phosphate)lysine).

This sequence belongs to the class-IV pyridoxal-phosphate-dependent aminotransferase family. It depends on pyridoxal 5'-phosphate as a cofactor.

The protein localises to the cytoplasm. The catalysed reaction is L-leucine + 2-oxoglutarate = 4-methyl-2-oxopentanoate + L-glutamate. The enzyme catalyses L-isoleucine + 2-oxoglutarate = (S)-3-methyl-2-oxopentanoate + L-glutamate. It catalyses the reaction L-valine + 2-oxoglutarate = 3-methyl-2-oxobutanoate + L-glutamate. Its pathway is amino-acid biosynthesis; L-isoleucine biosynthesis; L-isoleucine from 2-oxobutanoate: step 4/4. It functions in the pathway amino-acid biosynthesis; L-leucine biosynthesis; L-leucine from 3-methyl-2-oxobutanoate: step 4/4. The protein operates within amino-acid biosynthesis; L-valine biosynthesis; L-valine from pyruvate: step 4/4. Its function is as follows. Converts 2-oxo acids to branched-chain amino acids. Acts on leucine, isoleucine and valine. The sequence is that of Branched-chain-amino-acid aminotransferase 6 (BCAT6) from Arabidopsis thaliana (Mouse-ear cress).